The following is a 255-amino-acid chain: Ribosomal RNA small subunit methyltransferase G (255 aa).

A disordered region spans residues 1–44; it reads MSSPGRPKGEYRSAQHAGAVAGPPGRPDGEHRGSSGADPNGRLR. Residues G118, L123, 169 to 170, and R183 each bind S-adenosyl-L-methionine; that span reads VE.

The protein belongs to the methyltransferase superfamily. RNA methyltransferase RsmG family.

It is found in the cytoplasm. It catalyses the reaction guanosine(527) in 16S rRNA + S-adenosyl-L-methionine = N(7)-methylguanosine(527) in 16S rRNA + S-adenosyl-L-homocysteine. Specifically methylates the N7 position of guanine in position 527 of 16S rRNA. This chain is Ribosomal RNA small subunit methyltransferase G, found in Bordetella petrii (strain ATCC BAA-461 / DSM 12804 / CCUG 43448).